The sequence spans 389 residues: Formate-dependent phosphoribosylglycinamide formyltransferase (389 aa).

N(1)-(5-phospho-beta-D-ribosyl)glycinamide-binding positions include 12–13 and E72; that span reads EL. Residues R104, K145, 150 to 155, 185 to 188, and E193 each bind ATP; these read SSGKGQ and EEFI. The ATP-grasp domain occupies 109 to 301; the sequence is DLAAKELGLK…EFELHLRAVL (193 aa). 2 residues coordinate Mg(2+): E258 and E271. Residues D278, K350, and 357–358 each bind N(1)-(5-phospho-beta-D-ribosyl)glycinamide; that span reads RR.

It belongs to the PurK/PurT family. As to quaternary structure, homodimer.

It catalyses the reaction N(1)-(5-phospho-beta-D-ribosyl)glycinamide + formate + ATP = N(2)-formyl-N(1)-(5-phospho-beta-D-ribosyl)glycinamide + ADP + phosphate + H(+). It functions in the pathway purine metabolism; IMP biosynthesis via de novo pathway; N(2)-formyl-N(1)-(5-phospho-D-ribosyl)glycinamide from N(1)-(5-phospho-D-ribosyl)glycinamide (formate route): step 1/1. Involved in the de novo purine biosynthesis. Catalyzes the transfer of formate to 5-phospho-ribosyl-glycinamide (GAR), producing 5-phospho-ribosyl-N-formylglycinamide (FGAR). Formate is provided by PurU via hydrolysis of 10-formyl-tetrahydrofolate. This is Formate-dependent phosphoribosylglycinamide formyltransferase from Phocaeicola vulgatus (strain ATCC 8482 / DSM 1447 / JCM 5826 / CCUG 4940 / NBRC 14291 / NCTC 11154) (Bacteroides vulgatus).